The sequence spans 302 residues: MAGRELSHLQQLEAESIQIIREVAAEFDNPVMLYSIGKDSSVMLHLARKAFYPGKIPFPLLHVDTGWKFKEMIAFRDAQAKKFGFELLTHINPEGLAQGINPFDHGSAKHTDIMKTQGLKQALNQYGFDAAFGGARRDEEKSRAKERVYSFRDRHHRWDPKNQRPELWRTYNGAVNKGESIRVFPLSNWTELDIWQYIYQENIELVPLYFAAKRQVVERGGQLIMADDERMKLAEGEQFKEELVRFRTLGCYPLTAAMHSEADSLEKIIEEMLLTRSSERQGRLIDSDQSASMEQKKRQGYF.

A disordered region spans residues 280–302 (RQGRLIDSDQSASMEQKKRQGYF).

It belongs to the PAPS reductase family. CysD subfamily. In terms of assembly, heterodimer composed of CysD, the smaller subunit, and CysN.

It catalyses the reaction sulfate + ATP + H(+) = adenosine 5'-phosphosulfate + diphosphate. The protein operates within sulfur metabolism; hydrogen sulfide biosynthesis; sulfite from sulfate: step 1/3. Functionally, with CysN forms the ATP sulfurylase (ATPS) that catalyzes the adenylation of sulfate producing adenosine 5'-phosphosulfate (APS) and diphosphate, the first enzymatic step in sulfur assimilation pathway. APS synthesis involves the formation of a high-energy phosphoric-sulfuric acid anhydride bond driven by GTP hydrolysis by CysN coupled to ATP hydrolysis by CysD. This Shewanella baltica (strain OS223) protein is Sulfate adenylyltransferase subunit 2.